We begin with the raw amino-acid sequence, 208 residues long: MVGLIGQKVGMTQIFDARGCVTPVTVIRVEHNVVVGLKDVERFGYSAVILGTGCMKKSRISKPYAGQFAERIPPVRVMREFRGFTLDVSVGQVLDVRVLESVRYLDVCALSKGKGFQGVVKRWGFSGGRSSHGSKFHREAGSTGQCTSPGRTFKNVKMPGRMGAERVTVQNLRIERIDVGLGVVMVRGAVPGRNKATVFLRTAVKRER.

The interval 134 to 153 is disordered; that stretch reads SKFHREAGSTGQCTSPGRTF.

It belongs to the universal ribosomal protein uL3 family. In terms of assembly, part of the 50S ribosomal subunit. Forms a cluster with proteins L14 and L19.

In terms of biological role, one of the primary rRNA binding proteins, it binds directly near the 3'-end of the 23S rRNA, where it nucleates assembly of the 50S subunit. This chain is Large ribosomal subunit protein uL3, found in Treponema pallidum (strain Nichols).